A 326-amino-acid polypeptide reads, in one-letter code: uncharacterized protein (326 aa).

Transmembrane regions (helical) follow at residues W9–L29 and I33–Y53. The NADP(+) site is built by D120, N148, Y214, K218, and T252. Y214 (proton acceptor) is an active-site residue. The Lowers pKa of active site Tyr role is filled by K218.

It belongs to the short-chain dehydrogenases/reductases (SDR) family.

It localises to the mitochondrion membrane. In terms of biological role, involved in the resistance to DNA-damaging agents. This is an uncharacterized protein from Saccharomyces cerevisiae (strain ATCC 204508 / S288c) (Baker's yeast).